Here is a 143-residue protein sequence, read N- to C-terminus: Large ribosomal subunit protein uL11 (143 aa).

It belongs to the universal ribosomal protein uL11 family. As to quaternary structure, part of the ribosomal stalk of the 50S ribosomal subunit. Interacts with L10 and the large rRNA to form the base of the stalk. L10 forms an elongated spine to which L12 dimers bind in a sequential fashion forming a multimeric L10(L12)X complex. One or more lysine residues are methylated.

Functionally, forms part of the ribosomal stalk which helps the ribosome interact with GTP-bound translation factors. The protein is Large ribosomal subunit protein uL11 of Ralstonia pickettii (strain 12J).